The following is a 371-amino-acid chain: Glycosyltransferase 8 domain-containing protein 1 (371 aa).

Residues 1-7 (MSFRKVH) are Cytoplasmic-facing. A helical; Signal-anchor for type II membrane protein transmembrane segment spans residues 8-28 (IAIILLAAVVFLLILHHNILG). Topologically, residues 29–371 (LTDILTRQSS…RRHGEADGTK (343 aa)) are lumenal. 3 N-linked (GlcNAc...) asparagine glycosylation sites follow: Asn104, Asn249, and Asn257.

This sequence belongs to the glycosyltransferase 8 family.

The protein localises to the membrane. This is Glycosyltransferase 8 domain-containing protein 1 (glt8d1) from Xenopus tropicalis (Western clawed frog).